Consider the following 266-residue polypeptide: Glutamate racemase (266 aa).

Residues 9–10 and 41–42 contribute to the substrate site; these read DS and YG. Residue Cys-72 is the Proton donor/acceptor of the active site. A substrate-binding site is contributed by 73–74; that stretch reads NT. Residue Cys-183 is the Proton donor/acceptor of the active site. Residue 184-185 participates in substrate binding; sequence TH.

This sequence belongs to the aspartate/glutamate racemases family.

The catalysed reaction is L-glutamate = D-glutamate. It participates in cell wall biogenesis; peptidoglycan biosynthesis. Functionally, provides the (R)-glutamate required for cell wall biosynthesis. The protein is Glutamate racemase of Listeria monocytogenes serotype 4b (strain CLIP80459).